The chain runs to 468 residues: Transcription factor ste11 (468 aa).

A disordered region spans residues 1 to 21; it reads MSASLTAEQKDQKSSVKRPLN. Residues 16 to 80 constitute a DNA-binding region (HMG box); it reads VKRPLNSFML…KHMLENPEYK (65 aa). T173 carries the post-translational modification Phosphothreonine. S209, S211, and S218 each carry phosphoserine. Polar residues-rich tracts occupy residues 249 to 263 and 274 to 285; these read PSLE…SNCS and GTVSEQSNSDSP. Residues 249–290 form a disordered region; sequence PSLEANLPQNSSNCSARRVPKFDSKGTVSEQSNSDSPELSAD.

Phosphorylation results in inactivation.

The protein localises to the nucleus. It is found in the cytoplasm. Key transcription factor for sexual development. Activates the transcription of the matp, matm, mei2, mfm, ste6 and rgs1 genes. Binds specifically to a DNA fragment carrying a 10-base motif 5'-TTCTTTGTTY-3'. The sequence is that of Transcription factor ste11 (ste11) from Schizosaccharomyces pombe (strain 972 / ATCC 24843) (Fission yeast).